The sequence spans 302 residues: tRNA pseudouridine synthase B (302 aa).

The Nucleophile role is filled by Asp43.

The protein belongs to the pseudouridine synthase TruB family. Type 1 subfamily.

The enzyme catalyses uridine(55) in tRNA = pseudouridine(55) in tRNA. In terms of biological role, responsible for synthesis of pseudouridine from uracil-55 in the psi GC loop of transfer RNAs. This chain is tRNA pseudouridine synthase B, found in Burkholderia pseudomallei (strain 668).